A 594-amino-acid polypeptide reads, in one-letter code: Type I restriction enzyme EcoEI specificity subunit (594 aa).

This sequence belongs to the type-I restriction system S methylase family. The type I restriction/modification system is composed of three polypeptides R, M and S; the restriction enzyme has stoichiometry R(2)M(2)S(1) while the methyltransferase is M(2)S(1).

The specificity (S) subunit of a type I restriction enzyme; this subunit dictates DNA sequence specificity. The M and S subunits together form a methyltransferase (MTase) that methylates two adenine residues of the sequence 5'-GAGN(7)ATGC-3'. In the presence of the R subunit the complex can also act as an endonuclease, binding to the same target sequence but cutting the DNA some distance from this site. Whether the DNA is cut or modified depends on the methylation state of the target sequence. When the target site is unmodified, the DNA is cut. When the target site is hemimethylated, the complex acts as a maintenance MTase modifying the DNA so that both strands become methylated. After locating a non-methylated recognition site, the enzyme complex serves as a molecular motor that translocates DNA in an ATP-dependent manner until a collision occurs that triggers cleavage. The chain is Type I restriction enzyme EcoEI specificity subunit from Escherichia coli.